The sequence spans 477 residues: Ectonucleotide pyrophosphatase/phosphodiesterase family member 5 (477 aa).

A signal peptide spans 1–24 (MTSKFLLVSFILAALSLSTTFSLQ). Zn(2+) is bound by residues Asp-36 and Thr-72. The active-site Nucleophile is Thr-72. Residues Asn-101 and Asn-158 are each glycosylated (N-linked (GlcNAc...) asparagine). 4 residues coordinate Zn(2+): Asp-191, His-195, Asp-238, and His-239. N-linked (GlcNAc...) asparagine glycans are attached at residues Asn-292 and Asn-329. His-339 contributes to the Zn(2+) binding site. Residues Asn-362, Asn-369, Asn-382, and Asn-389 are each glycosylated (N-linked (GlcNAc...) asparagine). A helical transmembrane segment spans residues 432–452 (PYFIGVSLGSIIVIVFFVIFI).

Belongs to the nucleotide pyrophosphatase/phosphodiesterase family. Zn(2+) serves as cofactor. N-glycosylated.

The protein localises to the secreted. Its subcellular location is the membrane. In terms of biological role, can hydrolyze NAD but cannot hydrolyze nucleotide di- and triphosphates. Lacks lysopholipase D activity. May play a role in neuronal cell communication. The polypeptide is Ectonucleotide pyrophosphatase/phosphodiesterase family member 5 (Homo sapiens (Human)).